Reading from the N-terminus, the 358-residue chain is B3 domain-containing transcription factor NGA3 (358 aa).

The segment covering 1-14 has biased composition (polar residues); the sequence is MDLSLAPTTTTSSD. The segment at 1-45 is disordered; it reads MDLSLAPTTTTSSDQEQDRDQELTSNIGASSSSGPSGNNNNLPMM. The segment covering 25–45 has biased composition (low complexity); the sequence is SNIGASSSSGPSGNNNNLPMM. A DNA-binding region (TF-B3) is located at residues 56 to 162; the sequence is FDKVVTPSDV…KLYIDWRHRP (107 aa). The interval 310–358 is disordered; it reads EIGASSSSSSALRLNLSTDHDDDNDDGDDGDDDQFAKKGKSSLSLNFNP. The segment covering 329-342 has biased composition (acidic residues); it reads HDDDNDDGDDGDDD.

It is found in the nucleus. Its function is as follows. Regulates lateral organ growth. Functionally redundant with NGA1, NGA2 and NGA4. This Arabidopsis thaliana (Mouse-ear cress) protein is B3 domain-containing transcription factor NGA3 (NGA3).